The sequence spans 285 residues: Release factor glutamine methyltransferase (285 aa).

Residues 119–123 (GTGSG), Glu-142, Trp-175, and Asn-191 each bind S-adenosyl-L-methionine. 191-194 (NPPY) lines the substrate pocket.

Belongs to the protein N5-glutamine methyltransferase family. PrmC subfamily.

The catalysed reaction is L-glutaminyl-[peptide chain release factor] + S-adenosyl-L-methionine = N(5)-methyl-L-glutaminyl-[peptide chain release factor] + S-adenosyl-L-homocysteine + H(+). Methylates the class 1 translation termination release factors RF1/PrfA and RF2/PrfB on the glutamine residue of the universally conserved GGQ motif. The polypeptide is Release factor glutamine methyltransferase (Burkholderia pseudomallei (strain K96243)).